We begin with the raw amino-acid sequence, 290 residues long: Shikimate dehydrogenase (NADP(+)) (290 aa).

Residues 22–24 and Thr68 each bind shikimate; that span reads SLS. Lys72 functions as the Proton acceptor in the catalytic mechanism. The shikimate site is built by Asn93 and Asp108. Residues 133–137 and Ile228 contribute to the NADP(+) site; that span reads GSGGS. Tyr230 lines the shikimate pocket. Gly251 serves as a coordination point for NADP(+).

The protein belongs to the shikimate dehydrogenase family. As to quaternary structure, homodimer.

The enzyme catalyses shikimate + NADP(+) = 3-dehydroshikimate + NADPH + H(+). The protein operates within metabolic intermediate biosynthesis; chorismate biosynthesis; chorismate from D-erythrose 4-phosphate and phosphoenolpyruvate: step 4/7. Involved in the biosynthesis of the chorismate, which leads to the biosynthesis of aromatic amino acids. Catalyzes the reversible NADPH linked reduction of 3-dehydroshikimate (DHSA) to yield shikimate (SA). This chain is Shikimate dehydrogenase (NADP(+)), found in Leptospira borgpetersenii serovar Hardjo-bovis (strain JB197).